Reading from the N-terminus, the 672-residue chain is Putative per-hexamer repeat protein 5 (672 aa).

Gly residues-rich tracts occupy residues 141-161, 171-191, 215-233, 243-263, 273-295, 303-355, and 365-389; these read TGTG…GTGT, TDRG…GTGT, TGTG…GTDT, and TGTG…GSGS. 2 disordered regions span residues 141 to 193 and 213 to 672; these read TGTG…GTGT and TGTG…TGTA. A compositionally biased stretch (low complexity) spans 390-424; sequence GTAKVTGTATTTATVTETGTAKVTGTDTGTAKVTG. Over residues 425 to 469 the composition is skewed to gly residues; the sequence is TGTGTGTGTGTGTGTGTGTGTGTGTGTGTGTGTGTGTGTGTGSGS. Low complexity predominate over residues 470–486; the sequence is GTAKVTGTDTGTAKVTG. Positions 487–537 are enriched in gly residues; the sequence is TGTGTGTGTGTGTGTGTGTGTGTGSGSGSGSGSGSGSGTGTGTGLGSGSGS. The span at 538–552 shows a compositional bias: low complexity; that stretch reads GTAKVTGTGTAKVTG. The span at 553–617 shows a compositional bias: gly residues; sequence TGTGTGTGTG…GTGTGTGTGT (65 aa). Residues 618 to 636 are compositionally biased toward low complexity; it reads GTSTVTVRGTGTGTATATG. Composition is skewed to gly residues over residues 637–653 and 663–672; these read TGTG…GTGT and RGTGTGTGTA.

This chain is Putative per-hexamer repeat protein 5 (Phxr5), found in Mus musculus (Mouse).